The primary structure comprises 84 residues: Small ribosomal subunit protein bS20 (84 aa).

The protein belongs to the bacterial ribosomal protein bS20 family.

Binds directly to 16S ribosomal RNA. The protein is Small ribosomal subunit protein bS20 of Parabacteroides distasonis (strain ATCC 8503 / DSM 20701 / CIP 104284 / JCM 5825 / NCTC 11152).